Consider the following 101-residue polypeptide: Phosphoribosyl-AMP cyclohydrolase (101 aa).

Asp71 provides a ligand contact to Mg(2+). Cys72 provides a ligand contact to Zn(2+). Mg(2+)-binding residues include Asp73 and Asp75. Zn(2+) contacts are provided by Cys88 and Cys95.

It belongs to the PRA-CH family. As to quaternary structure, homodimer. Requires Mg(2+) as cofactor. Zn(2+) is required as a cofactor.

It is found in the cytoplasm. It carries out the reaction 1-(5-phospho-beta-D-ribosyl)-5'-AMP + H2O = 1-(5-phospho-beta-D-ribosyl)-5-[(5-phospho-beta-D-ribosylamino)methylideneamino]imidazole-4-carboxamide. It functions in the pathway amino-acid biosynthesis; L-histidine biosynthesis; L-histidine from 5-phospho-alpha-D-ribose 1-diphosphate: step 3/9. In terms of biological role, catalyzes the hydrolysis of the adenine ring of phosphoribosyl-AMP. This is Phosphoribosyl-AMP cyclohydrolase from Bacillus cereus (strain G9842).